Here is a 279-residue protein sequence, read N- to C-terminus: Probable ribosomal RNA small subunit methyltransferase A (279 aa).

Residues Asn-23, Leu-25, Gly-50, Glu-71, Asp-95, and Asn-110 each contribute to the S-adenosyl-L-methionine site.

Belongs to the class I-like SAM-binding methyltransferase superfamily. rRNA adenine N(6)-methyltransferase family. RsmA subfamily.

It is found in the cytoplasm. In terms of biological role, specifically dimethylates two adjacent adenosines in the loop of a conserved hairpin near the 3'-end of 16S rRNA in the 30S particle. May play a critical role in biogenesis of 30S subunits. This is Probable ribosomal RNA small subunit methyltransferase A from Thermococcus kodakarensis (strain ATCC BAA-918 / JCM 12380 / KOD1) (Pyrococcus kodakaraensis (strain KOD1)).